The sequence spans 441 residues: MPRARKGNALRKGGQRRGGGARSSTQADSGSSEDEAASEARSTTSDCPSLLSATTEDCLGGEAVDEQSQQENLEEKLKGYVDCLTDKSAKTRQGALESLRLALASRLLPDFLLERSLTLADALEKCLKKGKGEEQALAAAVLGILCVQLGPGPKGEELFRSLQPLLISVLSDSTASPTARLHCASALGLGCYVAATDVQDLVSCLACLEGVFSWSCGTSGSAASLVPASLHGLLCAALQAWALLLTICPGTHISHILDRQLPRLPQLLSSESVNLRIAAGEAIALLFELARDLEEDFVYEDMEALCGSLRTLATDSNKYRAKVDRRRQRSIFRAVLHFVEGGECEEETVRFGLEVLYIDSWARHRIYTAFKDVLGSGIHYHLQNNELLRDIFGLGPVLVLDAAALKACKISRFEKHLYNAAAFKARTKARSRARDKRADIL.

The segment covering 1–15 (MPRARKGNALRKGGQ) has biased composition (basic residues). Positions 1–51 (MPRARKGNALRKGGQRRGGGARSSTQADSGSSEDEAASEARSTTSDCPSLL) are disordered.

It belongs to the IFRD family. Associates with ribosomes; promoting ribosome inactivation.

Functionally, ribosome-binding protein that acts as an inhibitor of mRNA translation by promoting ribosome inactivation. Associates with the P- and E-sites of the ribosome and inserts a C-terminal helix into the mRNA exit channel to preclude translation. This chain is Interferon-related developmental regulator 2, found in Mus musculus (Mouse).